We begin with the raw amino-acid sequence, 174 residues long: Ribosome maturation factor RimM (174 aa).

A PRC barrel domain is found at 91–164 (DDAWYPHQLQ…KVVLSPPGGL (74 aa)).

The protein belongs to the RimM family. In terms of assembly, binds ribosomal protein uS19.

It localises to the cytoplasm. An accessory protein needed during the final step in the assembly of 30S ribosomal subunit, possibly for assembly of the head region. Essential for efficient processing of 16S rRNA. May be needed both before and after RbfA during the maturation of 16S rRNA. It has affinity for free ribosomal 30S subunits but not for 70S ribosomes. The protein is Ribosome maturation factor RimM of Kineococcus radiotolerans (strain ATCC BAA-149 / DSM 14245 / SRS30216).